Here is a 271-residue protein sequence, read N- to C-terminus: MAGISSDSRAKVLAELESVLPTATAQLARELFSVLAVVDSSAGLRRALTDPSREGKDKAALLSSLVRGKVSAQAEQIVDSLAKERWASARDLGDALETVAATVAIAVAENEAPGAEGLEKLENDLFVFNQTVAANHQVQRALSEPQASAEAKQKLASALVPGASQVAELLIGQAVAAPRGARPAKLVEQFATLAAARQQRWIATVTVGQALNKNQEARLSAGLNNLYGRDLKVNISVDPTLIGGVRVRVGDEVVDASVVNRLGELRRQLAG.

Belongs to the ATPase delta chain family. In terms of assembly, F-type ATPases have 2 components, F(1) - the catalytic core - and F(0) - the membrane proton channel. F(1) has five subunits: alpha(3), beta(3), gamma(1), delta(1), epsilon(1). F(0) has three main subunits: a(1), b(2) and c(10-14). The alpha and beta chains form an alternating ring which encloses part of the gamma chain. F(1) is attached to F(0) by a central stalk formed by the gamma and epsilon chains, while a peripheral stalk is formed by the delta and b chains.

It localises to the cell membrane. F(1)F(0) ATP synthase produces ATP from ADP in the presence of a proton or sodium gradient. F-type ATPases consist of two structural domains, F(1) containing the extramembraneous catalytic core and F(0) containing the membrane proton channel, linked together by a central stalk and a peripheral stalk. During catalysis, ATP synthesis in the catalytic domain of F(1) is coupled via a rotary mechanism of the central stalk subunits to proton translocation. Functionally, this protein is part of the stalk that links CF(0) to CF(1). It either transmits conformational changes from CF(0) to CF(1) or is implicated in proton conduction. The protein is ATP synthase subunit delta of Renibacterium salmoninarum (strain ATCC 33209 / DSM 20767 / JCM 11484 / NBRC 15589 / NCIMB 2235).